A 514-amino-acid chain; its full sequence is Type-2 serine--tRNA ligase (514 aa).

Residue Ala-313 participates in L-serine binding. Residue Cys-315 participates in Zn(2+) binding. Arg-344 is a binding site for L-serine. ATP is bound by residues 344–346 and 355–356; these read RWE and RV. 361-363 is an L-serine binding site; that stretch reads RGE. Positions 363 and 470 each coordinate Zn(2+). Position 477 (Arg-477) interacts with ATP.

It belongs to the class-II aminoacyl-tRNA synthetase family. Type-2 seryl-tRNA synthetase subfamily. Homodimer. Zn(2+) serves as cofactor.

It is found in the cytoplasm. The catalysed reaction is tRNA(Ser) + L-serine + ATP = L-seryl-tRNA(Ser) + AMP + diphosphate + H(+). It carries out the reaction tRNA(Sec) + L-serine + ATP = L-seryl-tRNA(Sec) + AMP + diphosphate + H(+). It participates in aminoacyl-tRNA biosynthesis; selenocysteinyl-tRNA(Sec) biosynthesis; L-seryl-tRNA(Sec) from L-serine and tRNA(Sec): step 1/1. Its function is as follows. Catalyzes the attachment of serine to tRNA(Ser). Is also able to aminoacylate tRNA(Sec) with serine, to form the misacylated tRNA L-seryl-tRNA(Sec), which will be further converted into selenocysteinyl-tRNA(Sec). The protein is Type-2 serine--tRNA ligase (serS) of Methanococcus maripaludis (strain DSM 14266 / JCM 13030 / NBRC 101832 / S2 / LL).